The primary structure comprises 379 residues: Queuine tRNA-ribosyltransferase (379 aa).

Aspartate 94 serves as the catalytic Proton acceptor. Substrate contacts are provided by residues 94 to 98, aspartate 148, glutamine 191, and glycine 218; that span reads DSGGF. The interval 249-255 is RNA binding; sequence GVGSPDS. The active-site Nucleophile is the aspartate 268. The RNA binding; important for wobble base 34 recognition stretch occupies residues 273–277; sequence TRIAR. The Zn(2+) site is built by cysteine 306, cysteine 308, cysteine 311, and histidine 337.

It belongs to the queuine tRNA-ribosyltransferase family. In terms of assembly, homodimer. Within each dimer, one monomer is responsible for RNA recognition and catalysis, while the other monomer binds to the replacement base PreQ1. The cofactor is Zn(2+).

The catalysed reaction is 7-aminomethyl-7-carbaguanine + guanosine(34) in tRNA = 7-aminomethyl-7-carbaguanosine(34) in tRNA + guanine. The protein operates within tRNA modification; tRNA-queuosine biosynthesis. In terms of biological role, catalyzes the base-exchange of a guanine (G) residue with the queuine precursor 7-aminomethyl-7-deazaguanine (PreQ1) at position 34 (anticodon wobble position) in tRNAs with GU(N) anticodons (tRNA-Asp, -Asn, -His and -Tyr). Catalysis occurs through a double-displacement mechanism. The nucleophile active site attacks the C1' of nucleotide 34 to detach the guanine base from the RNA, forming a covalent enzyme-RNA intermediate. The proton acceptor active site deprotonates the incoming PreQ1, allowing a nucleophilic attack on the C1' of the ribose to form the product. After dissociation, two additional enzymatic reactions on the tRNA convert PreQ1 to queuine (Q), resulting in the hypermodified nucleoside queuosine (7-(((4,5-cis-dihydroxy-2-cyclopenten-1-yl)amino)methyl)-7-deazaguanosine). This is Queuine tRNA-ribosyltransferase from Bacillus anthracis (strain CDC 684 / NRRL 3495).